A 99-amino-acid polypeptide reads, in one-letter code: NADH dehydrogenase [ubiquinone] 1 alpha subcomplex subunit 2 (99 aa).

Residue Ala2 is modified to N-acetylalanine. Cys24 and Cys58 are joined by a disulfide. The residue at position 64 (Lys64) is an N6-acetyllysine; alternate. Lys64 is modified (N6-succinyllysine; alternate). An N6-acetyllysine modification is found at Lys75.

Belongs to the complex I NDUFA2 subunit family. As to quaternary structure, complex I is composed of 45 different subunits.

Its subcellular location is the mitochondrion inner membrane. Functionally, accessory subunit of the mitochondrial membrane respiratory chain NADH dehydrogenase (Complex I), that is believed not to be involved in catalysis. Complex I functions in the transfer of electrons from NADH to the respiratory chain. The immediate electron acceptor for the enzyme is believed to be ubiquinone. The polypeptide is NADH dehydrogenase [ubiquinone] 1 alpha subcomplex subunit 2 (NDUFA2) (Macaca fascicularis (Crab-eating macaque)).